The sequence spans 406 residues: Phosphatidylserine decarboxylase proenzyme, mitochondrial (406 aa).

The transit peptide at 1–49 (MAVAGGRGCVRSLREGVLWRSSPCHCDYTATRHFLGALQKLPLQAWVRK) directs the protein to the mitochondrion. Residues 50–60 (VHTAPLRTLFL) lie on the Mitochondrial matrix side of the membrane. A helical membrane pass occupies residues 61-79 (LRPVPILLAAGGGYAGYRQ). Residues 80 to 406 (YEKYRERQLE…ILFGEALGSL (327 aa)) lie on the Mitochondrial intermembrane side of the membrane. Catalysis depends on charge relay system; for autoendoproteolytic cleavage activity residues Asp188, His264, and Ser375. Ser375 acts as the Schiff-base intermediate with substrate; via pyruvic acid; for decarboxylase activity in catalysis. Ser375 is modified (pyruvic acid (Ser); by autocatalysis).

This sequence belongs to the phosphatidylserine decarboxylase family. PSD-B subfamily. Eukaryotic type I sub-subfamily. Heterodimer of a large membrane-associated beta subunit and a small pyruvoyl-containing alpha subunit. The cofactor is pyruvate. Is synthesized initially as an inactive proenzyme. Formation of the active enzyme involves a self-maturation process in which the active site pyruvoyl group is generated from an internal serine residue via an autocatalytic post-translational modification. Two non-identical subunits are generated from the proenzyme in this reaction, and the pyruvate is formed at the N-terminus of the alpha chain, which is derived from the carboxyl end of the proenzyme. The autoendoproteolytic cleavage occurs by a canonical serine protease mechanism, in which the side chain hydroxyl group of the serine supplies its oxygen atom to form the C-terminus of the beta chain, while the remainder of the serine residue undergoes an oxidative deamination to produce ammonia and the pyruvoyl prosthetic group on the alpha chain. During this reaction, the Ser that is part of the protease active site of the proenzyme becomes the pyruvoyl prosthetic group, which constitutes an essential element of the active site of the mature decarboxylase.

The protein resides in the mitochondrion inner membrane. It localises to the cytoplasm. Its subcellular location is the lipid droplet. The catalysed reaction is a 1,2-diacyl-sn-glycero-3-phospho-L-serine + H(+) = a 1,2-diacyl-sn-glycero-3-phosphoethanolamine + CO2. It participates in phospholipid metabolism; phosphatidylethanolamine biosynthesis. With respect to regulation, inhibited by hydroxylamine. In terms of biological role, catalyzes the formation of phosphatidylethanolamine (PtdEtn) from phosphatidylserine (PtdSer). Plays a central role in phospholipid metabolism and in the interorganelle trafficking of phosphatidylserine. May be involved in lipid droplet biogenesis at the endoplasmic reticulum membrane. The protein is Phosphatidylserine decarboxylase proenzyme, mitochondrial of Rattus norvegicus (Rat).